The sequence spans 289 residues: Rhodopsin (289 aa).

Topologically, residues 1–7 are extracellular; it reads YLVNPAA. A helical membrane pass occupies residues 8 to 32; that stretch reads YAALGAYMFLLILIGFPINFLTLYV. The Cytoplasmic segment spans residues 33 to 44; it reads TLEHKKLRTPLN. Residues 45-67 form a helical membrane-spanning segment; it reads YILLNLAVANLFMVLGGFTTTMY. At 68-81 the chain is on the extracellular side; the sequence is TSMHGYFVLGRLGC. A disulfide bridge links Cys-81 with Cys-158. A helical transmembrane segment spans residues 82–104; sequence NLEAFFATLGGEIALWSLVVLAI. The 'Ionic lock' involved in activated form stabilization motif lies at 105 to 107; the sequence is ERW. Residues 105–123 lie on the Cytoplasmic side of the membrane; sequence ERWIVVCKPISNFRFTEDH. The chain crosses the membrane as a helical span at residues 124–144; the sequence is AIMGLAFTWVMALACAVPPLV. Residues 145–173 are Extracellular-facing; the sequence is GWSRYIPEGMQCSCGVDYYTRAEGFNNES. Asn-171 is a glycosylation site (N-linked (GlcNAc...) asparagine). Residues 174–195 form a helical membrane-spanning segment; the sequence is FVIYMFIVHFLIPLSVIFFCYG. Residues 196 to 223 are Cytoplasmic-facing; the sequence is RLLCAVKEAPAAQQESETTQRAEKEVSR. The chain crosses the membrane as a helical span at residues 224 to 245; the sequence is MVVIMVIGFLVCWLPYASVAWW. The Extracellular portion of the chain corresponds to 246-257; sequence IFCNQGSDFGPI. Residues 258–279 traverse the membrane as a helical segment; it reads FMTLPSFFAKSAAIYNPMIYIC. Lys-267 is subject to N6-(retinylidene)lysine. The Cytoplasmic portion of the chain corresponds to 280 to 289; that stretch reads MNKQFRHCMI.

Belongs to the G-protein coupled receptor 1 family. Opsin subfamily. Phosphorylated on some or all of the serine and threonine residues present in the C-terminal region. Post-translationally, contains one covalently linked retinal chromophore.

It is found in the membrane. It localises to the cell projection. Its subcellular location is the cilium. The protein resides in the photoreceptor outer segment. Functionally, photoreceptor required for image-forming vision at low light intensity. While most salt water fish species use retinal as chromophore, most freshwater fish use 3-dehydroretinal, or a mixture of retinal and 3-dehydroretinal. Light-induced isomerization of 11-cis to all-trans retinal triggers a conformational change that activates signaling via G-proteins. Subsequent receptor phosphorylation mediates displacement of the bound G-protein alpha subunit by arrestin and terminates signaling. In Abyssocottus korotneffi (Baikalian deep-water sculpin), this protein is Rhodopsin (rho).